A 277-amino-acid polypeptide reads, in one-letter code: Intercellular adhesion molecule 2 (277 aa).

An N-terminal signal peptide occupies residues 1–22 (MSSFACWSLSLLILFYSPGSGE). At 23-222 (KAFEVYIWSE…EVYEPMQDNQ (200 aa)) the chain is on the extracellular side. Ig-like C2-type domains lie at 39 to 98 (TESW…CSGK) and 127 to 196 (GEDF…LDLR). 5 N-linked (GlcNAc...) asparagine glycosylation sites follow: asparagine 45, asparagine 82, asparagine 158, asparagine 176, and asparagine 186. 3 disulfides stabilise this stretch: cysteine 46–cysteine 91, cysteine 50–cysteine 95, and cysteine 134–cysteine 189. The helical transmembrane segment at 223–247 (MVIIIVVVSILLFLFVTSVLLCFIF) threads the bilayer. The Cytoplasmic portion of the chain corresponds to 248-277 (GQHWHRRRTGTYGVLAAWRRLPRAFRARPV). Positions 250-277 (HWHRRRTGTYGVLAAWRRLPRAFRARPV) are required for interaction with EZR, MSN and RDX and co-localization to microvilli.

The protein belongs to the immunoglobulin superfamily. ICAM family. In terms of assembly, interacts with RDX, EZR and MSN. As to expression, expressed in endothelial cells and leukocytes. High levels found in lung.

Its subcellular location is the membrane. The protein resides in the cell projection. The protein localises to the microvillus. In terms of biological role, ICAM proteins are ligands for the leukocyte adhesion protein LFA-1 (integrin alpha-L/beta-2). ICAM2 may play a role in lymphocyte recirculation by blocking LFA-1-dependent cell adhesion. It mediates adhesive interactions important for antigen-specific immune response, NK-cell mediated clearance, lymphocyte recirculation, and other cellular interactions important for immune response and surveillance. This Mus musculus (Mouse) protein is Intercellular adhesion molecule 2 (Icam2).